Reading from the N-terminus, the 251-residue chain is tRNA (guanine-N(1)-)-methyltransferase (251 aa).

S-adenosyl-L-methionine-binding positions include G117 and 137–142 (IGDYVL).

This sequence belongs to the RNA methyltransferase TrmD family. In terms of assembly, homodimer.

It is found in the cytoplasm. The catalysed reaction is guanosine(37) in tRNA + S-adenosyl-L-methionine = N(1)-methylguanosine(37) in tRNA + S-adenosyl-L-homocysteine + H(+). In terms of biological role, specifically methylates guanosine-37 in various tRNAs. This is tRNA (guanine-N(1)-)-methyltransferase from Haemophilus ducreyi (strain 35000HP / ATCC 700724).